A 1798-amino-acid chain; its full sequence is Non-reducing polyketide synthase nscA (1798 aa).

The segment at 25–256 (RRLDQHSKDR…PLPVYDGLCH (232 aa)) is N-terminal acylcarrier protein transacylase domain (SAT). A Ketosynthase family 3 (KS3) domain is found at 392–825 (SSKLAIVGMA…GGNTTLLLED (434 aa)). Residues Cys565, His700, and His743 each act as for beta-ketoacyl synthase activity in the active site. The tract at residues 931 to 1224 (FTGQGAYYHG…LVRSMIPSAP (294 aa)) is malonyl-CoA:ACP transacylase (MAT) domain. Positions 1322-1458 (HQITAETVRT…ATILFEDPGA (137 aa)) are N-terminal hotdog fold. In terms of domain architecture, PKS/mFAS DH spans 1322-1632 (HQITAETVRT…FRRVPRLLMD (311 aa)). The active-site Proton acceptor; for dehydratase activity is His1354. Residues 1390–1628 (HMNLTDVEVL…GMIRFRRVPR (239 aa)) form a product template (PT) domain region. Positions 1486–1632 (ASRLSKPLAY…FRRVPRLLMD (147 aa)) are C-terminal hotdog fold. Asp1543 functions as the Proton donor; for dehydratase activity in the catalytic mechanism. Positions 1695-1721 (LLATSSGDSTPKEPPIVTPAESERAGP) are disordered. The Carrier domain maps to 1721 to 1798 (PVDNNMISQC…EMTAWIEEYC (78 aa)). At Ser1758 the chain carries O-(pantetheine 4'-phosphoryl)serine.

It depends on pantetheine 4'-phosphate as a cofactor.

The protein operates within secondary metabolite biosynthesis. Functionally, non-reducing polyketide synthase; part of the gene cluster that mediates the biosynthesis of neosartoricin B, a prenylated anthracenone that probably exhibits T-cell antiproliferative activity, suggestive of a physiological role as an immunosuppressive agent. The non-reducing polyketide synthase nscA probably synthesizes and cyclizes the decaketide backbone. The hydrolase nscB then mediates the product release through hydrolysis followed by spontaneous decarboxylation. The prenyltransferase nscD catalyzes the addition of the dimethylallyl group to the aromatic C5. The FAD-dependent monooxygenase nscC is then responsible for the stereospecific hydroxylation at C2. Neosartoricin B can be converted into two additional compounds neosartoricins C and D. Neosartoricin C is a spirocyclic compound that is cyclized through the attack of C3 hydroxyl on C14, followed by dehydration. On the other hand, neosartoricin D is a further cyclized compound in which attack of C2 on C14 in neosartoricin C results in the formation of the acetal-containing dioxabicyclo-octanone ring. Both of these compounds are novel and possibly represent related metabolites of the gene cluster. The polypeptide is Non-reducing polyketide synthase nscA (Trichophyton rubrum (strain ATCC MYA-4607 / CBS 118892) (Athlete's foot fungus)).